A 453-amino-acid polypeptide reads, in one-letter code: UDP-N-acetylmuramoylalanine--D-glutamate ligase (453 aa).

115–121 (GSNGKTT) provides a ligand contact to ATP.

Belongs to the MurCDEF family.

Its subcellular location is the cytoplasm. It catalyses the reaction UDP-N-acetyl-alpha-D-muramoyl-L-alanine + D-glutamate + ATP = UDP-N-acetyl-alpha-D-muramoyl-L-alanyl-D-glutamate + ADP + phosphate + H(+). Its pathway is cell wall biogenesis; peptidoglycan biosynthesis. Cell wall formation. Catalyzes the addition of glutamate to the nucleotide precursor UDP-N-acetylmuramoyl-L-alanine (UMA). This Koribacter versatilis (strain Ellin345) protein is UDP-N-acetylmuramoylalanine--D-glutamate ligase.